The chain runs to 149 residues: Large ribosomal subunit protein uL15 (149 aa).

The segment covering 1-28 (MVIKIHDLRPAPGSKRDKIRVGRGEGSK) has biased composition (basic and acidic residues). The disordered stretch occupies residues 1–54 (MVIKIHDLRPAPGSKRDKIRVGRGEGSKGKTAGRGTKGTKARKNVSPRFEGGQM).

It belongs to the universal ribosomal protein uL15 family. As to quaternary structure, part of the 50S ribosomal subunit.

Its function is as follows. Binds to the 23S rRNA. The sequence is that of Large ribosomal subunit protein uL15 from Saccharopolyspora erythraea (strain ATCC 11635 / DSM 40517 / JCM 4748 / NBRC 13426 / NCIMB 8594 / NRRL 2338).